The chain runs to 292 residues: uncharacterized protein (292 aa).

This sequence belongs to the glycosyltransferase 2 family. WaaE/KdtX subfamily.

This is an uncharacterized protein from Rickettsia prowazekii (strain Madrid E).